A 682-amino-acid polypeptide reads, in one-letter code: Methionine synthase reductase (682 aa).

The Flavodoxin-like domain maps to Phe4 to Phe147. Residue Leu93 to Phe124 participates in FMN binding. The FAD-binding FR-type domain maps to Thr271–Pro516. Lys293 contributes to the NADP(+) binding site. FAD-binding positions include Arg455 to Ser458 and Gly488 to Thr491. Residues Arg607–Gln609 and Asp643 each bind NADP(+). Trp681 contacts FAD.

The cofactor is FAD. FMN serves as cofactor.

It carries out the reaction 2 methylcob(III)alamin-[methionine synthase] + 2 S-adenosyl-L-homocysteine + NADP(+) + H(+) = 2 cob(II)alamin-[methionine synthase] + 2 S-adenosyl-L-methionine + NADPH. In terms of biological role, involved in the reductive regeneration of cob(I)alamin cofactor required for the maintenance of methionine synthase in a functional state. This is Methionine synthase reductase from Caenorhabditis elegans.